The primary structure comprises 286 residues: ATP synthase gamma chain (286 aa).

The protein belongs to the ATPase gamma chain family. F-type ATPases have 2 components, CF(1) - the catalytic core - and CF(0) - the membrane proton channel. CF(1) has five subunits: alpha(3), beta(3), gamma(1), delta(1), epsilon(1). CF(0) has three main subunits: a, b and c.

The protein resides in the cell inner membrane. In terms of biological role, produces ATP from ADP in the presence of a proton gradient across the membrane. The gamma chain is believed to be important in regulating ATPase activity and the flow of protons through the CF(0) complex. This is ATP synthase gamma chain from Pseudomonas syringae pv. tomato (strain ATCC BAA-871 / DC3000).